A 264-amino-acid chain; its full sequence is Cytosolic Fe-S cluster assembly factor Nubp2 homolog (264 aa).

14-21 (GKGGVGKS) lines the ATP pocket. [4Fe-4S] cluster contacts are provided by Cys188 and Cys191.

Belongs to the Mrp/NBP35 ATP-binding proteins family. NUBP2/CFD1 subfamily. As to quaternary structure, heterotetramer of 2 Nubp1 and 2 Nubp2 chains. Requires [4Fe-4S] cluster as cofactor.

It is found in the cytoplasm. Functionally, component of the cytosolic iron-sulfur (Fe/S) protein assembly (CIA) machinery. Required for maturation of extramitochondrial Fe-S proteins. The Nubp1-Nubp2 heterotetramer forms a Fe-S scaffold complex, mediating the de novo assembly of an Fe-S cluster and its transfer to target apoproteins. The protein is Cytosolic Fe-S cluster assembly factor Nubp2 homolog of Drosophila grimshawi (Hawaiian fruit fly).